We begin with the raw amino-acid sequence, 96 residues long: Large ribosomal subunit protein bL28 (96 aa).

Belongs to the bacterial ribosomal protein bL28 family.

This Orientia tsutsugamushi (strain Boryong) (Rickettsia tsutsugamushi) protein is Large ribosomal subunit protein bL28.